The sequence spans 601 residues: Elongation factor 4 (601 aa).

Residues 2-184 (DLIRNFSIIA…EMIARVPPPT (183 aa)) enclose the tr-type G domain. Residues 14 to 19 (DHGKST) and 131 to 134 (NKID) each bind GTP.

This sequence belongs to the TRAFAC class translation factor GTPase superfamily. Classic translation factor GTPase family. LepA subfamily.

The protein localises to the cell inner membrane. The enzyme catalyses GTP + H2O = GDP + phosphate + H(+). Functionally, required for accurate and efficient protein synthesis under certain stress conditions. May act as a fidelity factor of the translation reaction, by catalyzing a one-codon backward translocation of tRNAs on improperly translocated ribosomes. Back-translocation proceeds from a post-translocation (POST) complex to a pre-translocation (PRE) complex, thus giving elongation factor G a second chance to translocate the tRNAs correctly. Binds to ribosomes in a GTP-dependent manner. The sequence is that of Elongation factor 4 from Polynucleobacter asymbioticus (strain DSM 18221 / CIP 109841 / QLW-P1DMWA-1) (Polynucleobacter necessarius subsp. asymbioticus).